The sequence spans 223 residues: Ubiquitin carboxyl-terminal hydrolase isozyme L1 (223 aa).

N-acetylmethionine is present on methionine 1. A UCH catalytic domain is found at 2–221; that stretch reads QLKPMEINPE…VRFSAVALCK (220 aa). An interaction with ubiquitin region spans residues 5–10; the sequence is PMEINP. Cysteine 90 functions as the Nucleophile in the catalytic mechanism. Phosphoserine is present on serine 125. Histidine 161 (proton donor) is an active-site residue. Residues 211-216 are interaction with ubiquitin; the sequence is EVRFSA. Cysteine 220 carries S-farnesyl cysteine lipidation. Positions 221–223 are cleaved as a propeptide — removed in mature form; sequence KAA.

Belongs to the peptidase C12 family. In terms of assembly, monomer. Homodimer. Interacts with COPS5 and SNCA. Post-translationally, O-glycosylated. As to expression, expressed in the placenta at all stages of pregnancy. Expression increases as pregnancy progresses.

It localises to the cytoplasm. It is found in the endoplasmic reticulum membrane. The protein resides in the nucleus. The enzyme catalyses Thiol-dependent hydrolysis of ester, thioester, amide, peptide and isopeptide bonds formed by the C-terminal Gly of ubiquitin (a 76-residue protein attached to proteins as an intracellular targeting signal).. In terms of biological role, ubiquitin-protein hydrolase involved both in the processing of ubiquitin precursors and of ubiquitinated proteins. This enzyme is a thiol protease that recognizes and hydrolyzes a peptide bond at the C-terminal glycine of ubiquitin. Also binds to free monoubiquitin and may prevent its degradation in lysosomes. The homodimer may have ATP-independent ubiquitin ligase activity. This is Ubiquitin carboxyl-terminal hydrolase isozyme L1 (UCHL1) from Macaca fascicularis (Crab-eating macaque).